Reading from the N-terminus, the 400-residue chain is Putative zinc-binding protein ORF78 (400 aa).

The tract at residues 9-33 (LPRKRRAVAQPRTRQPPPKVHREDT) is disordered.

This chain is Putative zinc-binding protein ORF78 (ORF78), found in Ictalurid herpesvirus 1 (strain Auburn) (IcHV-1).